Reading from the N-terminus, the 122-residue chain is uncharacterized protein (122 aa).

The protein belongs to the phage O protein family.

This is an uncharacterized protein from Escherichia coli O6:H1 (strain CFT073 / ATCC 700928 / UPEC).